Reading from the N-terminus, the 356-residue chain is Protein RecA (356 aa).

68 to 75 (GPESSGKT) contacts ATP.

The protein belongs to the RecA family.

The protein localises to the cytoplasm. Its function is as follows. Can catalyze the hydrolysis of ATP in the presence of single-stranded DNA, the ATP-dependent uptake of single-stranded DNA by duplex DNA, and the ATP-dependent hybridization of homologous single-stranded DNAs. It interacts with LexA causing its activation and leading to its autocatalytic cleavage. The protein is Protein RecA of Clostridium botulinum (strain Eklund 17B / Type B).